Reading from the N-terminus, the 395-residue chain is Phosphopentomutase (395 aa).

Mn(2+) contacts are provided by aspartate 14, aspartate 286, histidine 291, aspartate 327, histidine 328, and histidine 339.

This sequence belongs to the phosphopentomutase family. The cofactor is Mn(2+).

It localises to the cytoplasm. It carries out the reaction 2-deoxy-alpha-D-ribose 1-phosphate = 2-deoxy-D-ribose 5-phosphate. It catalyses the reaction alpha-D-ribose 1-phosphate = D-ribose 5-phosphate. Its pathway is carbohydrate degradation; 2-deoxy-D-ribose 1-phosphate degradation; D-glyceraldehyde 3-phosphate and acetaldehyde from 2-deoxy-alpha-D-ribose 1-phosphate: step 1/2. Its function is as follows. Isomerase that catalyzes the conversion of deoxy-ribose 1-phosphate (dRib-1-P) and ribose 1-phosphate (Rib-1-P) to deoxy-ribose 5-phosphate (dRib-5-P) and ribose 5-phosphate (Rib-5-P), respectively. The polypeptide is Phosphopentomutase (Staphylococcus saprophyticus subsp. saprophyticus (strain ATCC 15305 / DSM 20229 / NCIMB 8711 / NCTC 7292 / S-41)).